A 384-amino-acid polypeptide reads, in one-letter code: GTPase Obg (384 aa).

The Obg domain occupies 1–159 (MKFIDEAKIE…RSLQLELKVL (159 aa)). Disordered regions lie at residues 20–46 (ATSF…GSVW) and 129–149 (HFKS…EGET). The segment covering 33–43 (GPDGGDGGKGG) has biased composition (gly residues). The segment covering 130-143 (FKSSVNRAPKQSTP) has biased composition (polar residues). The OBG-type G domain maps to 160–348 (ADVGLLGMPN…LVHQINQYLA (189 aa)). Residues 166 to 173 (GMPNAGKS), 191 to 195 (FTTLH), 213 to 216 (DIPG), 284 to 287 (NKLD), and 329 to 331 (SAL) contribute to the GTP site. Mg(2+)-binding residues include Ser173 and Thr193.

It belongs to the TRAFAC class OBG-HflX-like GTPase superfamily. OBG GTPase family. As to quaternary structure, monomer. The cofactor is Mg(2+).

The protein resides in the cytoplasm. Its function is as follows. An essential GTPase which binds GTP, GDP and possibly (p)ppGpp with moderate affinity, with high nucleotide exchange rates and a fairly low GTP hydrolysis rate; the half-life of the GTP-bound state is about 50 minutes. Plays a role in control of the cell cycle, stress response, ribosome biogenesis and in those bacteria that undergo differentiation, in morphogenesis control. The chain is GTPase Obg from Neisseria gonorrhoeae (strain ATCC 700825 / FA 1090).